Reading from the N-terminus, the 119-residue chain is Small ribosomal subunit protein uS10 (119 aa).

Belongs to the universal ribosomal protein uS10 family. Component of the small ribosomal subunit. Mature ribosomes consist of a small (40S) and a large (60S) subunit. The 40S subunit contains about 32 different proteins and 1 molecule of RNA (18S). The 60S subunit contains 45 different proteins and 3 molecules of RNA (25S, 5.8S and 5S).

Its subcellular location is the cytoplasm. Component of the ribosome, a large ribonucleoprotein complex responsible for the synthesis of proteins in the cell. The small ribosomal subunit (SSU) binds messenger RNAs (mRNAs) and translates the encoded message by selecting cognate aminoacyl-transfer RNA (tRNA) molecules. The large subunit (LSU) contains the ribosomal catalytic site termed the peptidyl transferase center (PTC), which catalyzes the formation of peptide bonds, thereby polymerizing the amino acids delivered by tRNAs into a polypeptide chain. The nascent polypeptides leave the ribosome through a tunnel in the LSU and interact with protein factors that function in enzymatic processing, targeting, and the membrane insertion of nascent chains at the exit of the ribosomal tunnel. This is Small ribosomal subunit protein uS10 (RPS20) from Candida albicans (strain SC5314 / ATCC MYA-2876) (Yeast).